Here is a 187-residue protein sequence, read N- to C-terminus: MTHILFAVLVLALLALAFGIILGFAAVKFYVEADPIVDQLDALLPQTQCGQCGYPGCKPYAEALANGDQINKCVPGGDATMRKIADLMGVDPQPLGSAEAAIPVKKVAFIHEDQCIGCTKCIQACPVDAIVGATKAMHTVITDECTGCDLCVDPCPTDCIEMIPVPTTVDNWKWDLASVAIPVKIVE.

Residues 1-26 are hydrophobic; that stretch reads MTHILFAVLVLALLALAFGIILGFAA. A 4Fe-4S domain is found at 32 to 90; the sequence is EADPIVDQLDALLPQTQCGQCGYPGCKPYAEALANGDQINKCVPGGDATMRKIADLMGV. Residues cysteine 49, cysteine 52, cysteine 57, cysteine 73, cysteine 115, cysteine 118, cysteine 121, cysteine 125, cysteine 145, cysteine 148, cysteine 151, and cysteine 155 each coordinate [4Fe-4S] cluster. 2 4Fe-4S ferredoxin-type domains span residues 106 to 135 and 136 to 165; these read KVAFIHEDQCIGCTKCIQACPVDAIVGATK and AMHTVITDECTGCDLCVDPCPTDCIEMIPV.

The protein belongs to the 4Fe4S bacterial-type ferredoxin family. RnfB subfamily. As to quaternary structure, the complex is composed of six subunits: RnfA, RnfB, RnfC, RnfD, RnfE and RnfG. [4Fe-4S] cluster serves as cofactor.

The protein localises to the cell inner membrane. Its function is as follows. Part of a membrane-bound complex that couples electron transfer with translocation of ions across the membrane. This chain is Ion-translocating oxidoreductase complex subunit B, found in Aeromonas salmonicida (strain A449).